The following is a 312-amino-acid chain: MNWLNNVVRPKIRSILKRETPENLWIKCPDSGQLVFYKDVEANQFVIPGSNYHMRMGATARLKSIFDNETWFDVALPDVAADPLKFRDERRYADRIKDARAKTGMNDAVKVGYGRIESTPAVVAVQDFDFMGGSLGMAAGEAIVTGLQLAVEKHAPFIMFAASGGARMQEGILSLMQMPRTTVAIQLLREAGLPYIVVLTNPTTGGVTASYAMLGDVQLAEPGALIGFAGARVIEQTIREKLPEGFQRAEYLKEHGMVDMVVHRHEMRPTLARLCRLLMKVPAPHADEVAAPPPPDVEGPPPAAEPVALPPA.

Residues 24-293 (LWIKCPDSGQ…PHADEVAAPP (270 aa)) enclose the CoA carboxyltransferase N-terminal domain. Residues 286 to 312 (ADEVAAPPPPDVEGPPPAAEPVALPPA) are disordered. The span at 291–312 (APPPPDVEGPPPAAEPVALPPA) shows a compositional bias: pro residues.

It belongs to the AccD/PCCB family. Acetyl-CoA carboxylase is a heterohexamer composed of biotin carboxyl carrier protein (AccB), biotin carboxylase (AccC) and two subunits each of ACCase subunit alpha (AccA) and ACCase subunit beta (AccD).

The protein resides in the cytoplasm. The catalysed reaction is N(6)-carboxybiotinyl-L-lysyl-[protein] + acetyl-CoA = N(6)-biotinyl-L-lysyl-[protein] + malonyl-CoA. It participates in lipid metabolism; malonyl-CoA biosynthesis; malonyl-CoA from acetyl-CoA: step 1/1. Functionally, component of the acetyl coenzyme A carboxylase (ACC) complex. Biotin carboxylase (BC) catalyzes the carboxylation of biotin on its carrier protein (BCCP) and then the CO(2) group is transferred by the transcarboxylase to acetyl-CoA to form malonyl-CoA. The polypeptide is Acetyl-coenzyme A carboxylase carboxyl transferase subunit beta (Afipia carboxidovorans (strain ATCC 49405 / DSM 1227 / KCTC 32145 / OM5) (Oligotropha carboxidovorans)).